Here is a 387-residue protein sequence, read N- to C-terminus: MDLFEYQAKELFAKHNVPTTPGRVTDSAEDAKAIATEIGKPVMVKAQVKVGGRGKAGGVKYAATPDDAFTHAQNILGLDIKGHVVKKLLVAEASDIAEEYYISFLLDRSNRTYLAMCSVEGGMEIEEVAATKPDRLAKVPVNAVKGVDLAFAREIAEKGHLPAEVLDAAAVTIQKLWEVFTKEDATLVEVNPLVRTPDDQILALDGKVTLDANADFRQEGHKEFEDKDATDPLELKAKENDLNYVKLDGEVGIIGNGAGLVMSTLDVVAYAGEKHGGVKPANFLDIGGGASAEVMANGLDVILNDSQVKSVFVNVFGGITSCDAVANGIVKALEILGDEANKPLVVRLDGNNVDEGRRILAEANHPLVVQAETMDSGADKAAELANK.

Positions 9–236 (KELFAKHNVP…KDATDPLELK (228 aa)) constitute an ATP-grasp domain. Residues K45, 52–54 (GRG), S94, and E99 contribute to the ATP site. The Mg(2+) site is built by N191 and D205. Residues N256 and 318–320 (GIT) each bind substrate.

The protein belongs to the succinate/malate CoA ligase beta subunit family. In terms of assembly, heterotetramer of two alpha and two beta subunits. Mg(2+) is required as a cofactor.

The catalysed reaction is succinate + ATP + CoA = succinyl-CoA + ADP + phosphate. The enzyme catalyses GTP + succinate + CoA = succinyl-CoA + GDP + phosphate. It participates in carbohydrate metabolism; tricarboxylic acid cycle; succinate from succinyl-CoA (ligase route): step 1/1. In terms of biological role, succinyl-CoA synthetase functions in the citric acid cycle (TCA), coupling the hydrolysis of succinyl-CoA to the synthesis of either ATP or GTP and thus represents the only step of substrate-level phosphorylation in the TCA. The beta subunit provides nucleotide specificity of the enzyme and binds the substrate succinate, while the binding sites for coenzyme A and phosphate are found in the alpha subunit. In Mycolicibacterium gilvum (strain PYR-GCK) (Mycobacterium gilvum (strain PYR-GCK)), this protein is Succinate--CoA ligase [ADP-forming] subunit beta.